A 540-amino-acid polypeptide reads, in one-letter code: Cytochrome P450 monooxygenase prx8 (540 aa).

The chain crosses the membrane as a helical span at residues 50 to 68 (ALGAAIALFACACAYALVA). N-linked (GlcNAc...) asparagine glycosylation occurs at Asn460. Heme is bound at residue Cys483.

Belongs to the cytochrome P450 family. Requires heme as cofactor.

It is found in the membrane. Its pathway is sesquiterpene biosynthesis. Cytochrome P450 monooxygenase; part of the gene cluster that mediates the biosynthesis of PR-toxin, a bicyclic sesquiterpene belonging to the eremophilane class and acting as a mycotoxin. The first step of the pathway is catalyzed by the aristolochene synthase which performs the cyclization of trans,trans-farnesyl diphosphate (FPP) to the bicyclic sesquiterpene aristolochene. Following the formation of aristolochene, the non-oxygenated aristolochene is converted to the trioxygenated intermediate eremofortin B, via 7-epi-neopetasone. This conversion appears to involve three enzymes, a hydroxysterol oxidase-like enzyme, the quinone-oxidase prx3 that forms the quinone-type-structure in the bicyclic nucleus of aristolochene with the C8-oxo group and the C-3 hydroxyl group, and the P450 monooxygenase prx9 that introduces the epoxide at the double bond between carbons 1 and 2. No monoxy or dioxy-intermediates have been reported to be released to the broth, so these three early oxidative reactions may be coupled together. Eremofortin B is further oxidized by another P450 monooxygenase, that introduces a second epoxide between carbons 7 and 11 prior to acetylation to eremofortin A by the acetyltransferase prx11. The second epoxidation may be performed by a second P450 monooxygenase. After the acetylation step, eremofortin A is converted to eremofortin C and then to PR-toxin. First the conversion of eremofortin A to eremofortin C proceeds by oxidation of the side chain of the molecule at C-12 and is catalyzed by the short-chain oxidoreductase prx1. The cytochrome P450 monooxygenase prx8 also plays a role in this step. The primary alcohol formed at C-12 is finally oxidized by the short-chain alcohol dehydrogenase prx4 that forms PR-toxin. The protein is Cytochrome P450 monooxygenase prx8 of Penicillium rubens (strain ATCC 28089 / DSM 1075 / NRRL 1951 / Wisconsin 54-1255) (Penicillium chrysogenum).